A 118-amino-acid chain; its full sequence is uncharacterized protein (118 aa).

The signal sequence occupies residues 1–22 (MKMSYLRSGIVGFLAGASLSYA). Positions 41–71 (TATEALETDKQLYKKIEKKIEELESSCVKKS) form a coiled coil.

This is an uncharacterized protein from Schizosaccharomyces pombe (strain 972 / ATCC 24843) (Fission yeast).